Here is a 341-residue protein sequence, read N- to C-terminus: tRNA N6-adenosine threonylcarbamoyltransferase (341 aa).

Fe cation contacts are provided by His111 and His115. Substrate is bound by residues 134-138 (LVSGG), Asp167, Gly180, and Asn276. Asp304 serves as a coordination point for Fe cation.

It belongs to the KAE1 / TsaD family. Fe(2+) is required as a cofactor.

Its subcellular location is the cytoplasm. The catalysed reaction is L-threonylcarbamoyladenylate + adenosine(37) in tRNA = N(6)-L-threonylcarbamoyladenosine(37) in tRNA + AMP + H(+). Its function is as follows. Required for the formation of a threonylcarbamoyl group on adenosine at position 37 (t(6)A37) in tRNAs that read codons beginning with adenine. Is involved in the transfer of the threonylcarbamoyl moiety of threonylcarbamoyl-AMP (TC-AMP) to the N6 group of A37, together with TsaE and TsaB. TsaD likely plays a direct catalytic role in this reaction. This is tRNA N6-adenosine threonylcarbamoyltransferase from Pseudomonas aeruginosa (strain UCBPP-PA14).